The following is a 434-amino-acid chain: ATP-dependent protease ATPase subunit HslU (434 aa).

Residues Ile-18, Gly-60–Glu-65, Asp-247, Glu-312, and Arg-384 each bind ATP.

This sequence belongs to the ClpX chaperone family. HslU subfamily. As to quaternary structure, a double ring-shaped homohexamer of HslV is capped on each side by a ring-shaped HslU homohexamer. The assembly of the HslU/HslV complex is dependent on binding of ATP.

It localises to the cytoplasm. Its function is as follows. ATPase subunit of a proteasome-like degradation complex; this subunit has chaperone activity. The binding of ATP and its subsequent hydrolysis by HslU are essential for unfolding of protein substrates subsequently hydrolyzed by HslV. HslU recognizes the N-terminal part of its protein substrates and unfolds these before they are guided to HslV for hydrolysis. The polypeptide is ATP-dependent protease ATPase subunit HslU (Brucella melitensis biotype 2 (strain ATCC 23457)).